The following is a 677-amino-acid chain: Methionine--tRNA ligase (677 aa).

The short motif at 15 to 25 is the 'HIGH' region element; sequence PYANGSIHLGH. Residues C146, C149, C159, and C162 each contribute to the Zn(2+) site. Residues 333 to 337 carry the 'KMSKS' region motif; that stretch reads KMSKS. Position 336 (K336) interacts with ATP. Residues 575 to 677 form the tRNA-binding domain; that stretch reads DFAKVDLRVA…DGAKPGQQVK (103 aa).

This sequence belongs to the class-I aminoacyl-tRNA synthetase family. MetG type 1 subfamily. Homodimer. Zn(2+) is required as a cofactor.

The protein localises to the cytoplasm. It catalyses the reaction tRNA(Met) + L-methionine + ATP = L-methionyl-tRNA(Met) + AMP + diphosphate. Functionally, is required not only for elongation of protein synthesis but also for the initiation of all mRNA translation through initiator tRNA(fMet) aminoacylation. This is Methionine--tRNA ligase from Klebsiella pneumoniae (strain 342).